Reading from the N-terminus, the 243-residue chain is Thaumatin-like protein 1 (243 aa).

A signal peptide spans M1–S22. 8 cysteine pairs are disulfide-bonded: C31/C242, C79/C88, C93/C100, C148/C231, C153/C214, C161/C177, C181/C190, and C191/C201.

Belongs to the thaumatin family.

It localises to the secreted. The protein resides in the extracellular space. The protein localises to the apoplast. Functionally, possesses antifungal activity. In Castanea sativa (Sweet chestnut), this protein is Thaumatin-like protein 1 (TL1).